A 254-amino-acid chain; its full sequence is Ribonuclease HII (254 aa).

In terms of domain architecture, RNase H type-2 spans 67–254 (IVIAGVDEVG…HRMSFLKNII (188 aa)). Asp-73, Glu-74, and Asp-170 together coordinate a divalent metal cation.

The protein belongs to the RNase HII family. Requires Mn(2+) as cofactor. Mg(2+) is required as a cofactor.

It is found in the cytoplasm. It catalyses the reaction Endonucleolytic cleavage to 5'-phosphomonoester.. In terms of biological role, endonuclease that specifically degrades the RNA of RNA-DNA hybrids. This is Ribonuclease HII from Clostridium acetobutylicum (strain ATCC 824 / DSM 792 / JCM 1419 / IAM 19013 / LMG 5710 / NBRC 13948 / NRRL B-527 / VKM B-1787 / 2291 / W).